A 244-amino-acid chain; its full sequence is Carboxy-S-adenosyl-L-methionine synthase (244 aa).

S-adenosyl-L-methionine is bound by residues Tyr40, Gly65–Ser67, Asp90–Asn91, Asp119–Leu120, Asn134, and Arg201.

The protein belongs to the class I-like SAM-binding methyltransferase superfamily. Cx-SAM synthase family. Homodimer.

It carries out the reaction prephenate + S-adenosyl-L-methionine = carboxy-S-adenosyl-L-methionine + 3-phenylpyruvate + H2O. In terms of biological role, catalyzes the conversion of S-adenosyl-L-methionine (SAM) to carboxy-S-adenosyl-L-methionine (Cx-SAM). The sequence is that of Carboxy-S-adenosyl-L-methionine synthase from Geobacter metallireducens (strain ATCC 53774 / DSM 7210 / GS-15).